Consider the following 542-residue polypeptide: Zinc finger protein 280A (542 aa).

Residues 66–185 (VTPGSNSRRK…RDSKRVKLRD (120 aa)) form a disordered region. Residues 107-122 (EGRSTDSPVTMKSSSE) show a composition bias toward polar residues. Over residues 128–143 (SSPQVVSPSSSDSLPP) the composition is skewed to low complexity. Basic and acidic residues predominate over residues 161 to 185 (SSPDSKRLSTSDINSRDSKRVKLRD). C2H2-type zinc fingers lie at residues 334–357 (TTCQ…DSVH), 364–387 (AVCK…KDHH), 423–445 (LLCL…CWRH), and 451–474 (LQCS…TKDH). Polar residues predominate over residues 499–520 (QPGSSGMASVIVSNTDPQSSPV). Residues 499 to 542 (QPGSSGMASVIVSNTDPQSSPVKTKKKTAMNTRDSRLPCSKDSS) form a disordered region.

It is found in the nucleus. May function as a transcription factor. The polypeptide is Zinc finger protein 280A (ZNF280A) (Homo sapiens (Human)).